The sequence spans 352 residues: Biotin synthase (352 aa).

The 219-residue stretch at 44–262 (NRVQVSTLLS…LAVARILMPK (219 aa)) folds into the Radical SAM core domain. Residues Cys-59, Cys-63, and Cys-66 each contribute to the [4Fe-4S] cluster site. Residues Cys-103, Cys-134, Cys-194, and Arg-266 each contribute to the [2Fe-2S] cluster site.

The protein belongs to the radical SAM superfamily. Biotin synthase family. As to quaternary structure, homodimer. It depends on [4Fe-4S] cluster as a cofactor. [2Fe-2S] cluster is required as a cofactor.

The enzyme catalyses (4R,5S)-dethiobiotin + (sulfur carrier)-SH + 2 reduced [2Fe-2S]-[ferredoxin] + 2 S-adenosyl-L-methionine = (sulfur carrier)-H + biotin + 2 5'-deoxyadenosine + 2 L-methionine + 2 oxidized [2Fe-2S]-[ferredoxin]. Its pathway is cofactor biosynthesis; biotin biosynthesis; biotin from 7,8-diaminononanoate: step 2/2. Catalyzes the conversion of dethiobiotin (DTB) to biotin by the insertion of a sulfur atom into dethiobiotin via a radical-based mechanism. This is Biotin synthase from Pseudomonas entomophila (strain L48).